Here is a 123-residue protein sequence, read N- to C-terminus: Small ribosomal subunit protein uS12 (123 aa).

The interval M1–G32 is disordered. The span at R9 to V19 shows a compositional bias: basic residues. Residue D89 is modified to 3-methylthioaspartic acid.

Belongs to the universal ribosomal protein uS12 family. Part of the 30S ribosomal subunit. Contacts proteins S8 and S17. May interact with IF1 in the 30S initiation complex.

Functionally, with S4 and S5 plays an important role in translational accuracy. Interacts with and stabilizes bases of the 16S rRNA that are involved in tRNA selection in the A site and with the mRNA backbone. Located at the interface of the 30S and 50S subunits, it traverses the body of the 30S subunit contacting proteins on the other side and probably holding the rRNA structure together. The combined cluster of proteins S8, S12 and S17 appears to hold together the shoulder and platform of the 30S subunit. The sequence is that of Small ribosomal subunit protein uS12 from Corynebacterium kroppenstedtii (strain DSM 44385 / JCM 11950 / CIP 105744 / CCUG 35717).